The chain runs to 254 residues: Triosephosphate isomerase (254 aa).

A substrate-binding site is contributed by 9–11; sequence NWK. His98 (electrophile) is an active-site residue. The Proton acceptor role is filled by Glu170. Residues Gly176, Ser215, and 236-237 each bind substrate; that span reads GG.

Belongs to the triosephosphate isomerase family. Homodimer.

The protein localises to the cytoplasm. It carries out the reaction D-glyceraldehyde 3-phosphate = dihydroxyacetone phosphate. The protein operates within carbohydrate biosynthesis; gluconeogenesis. It functions in the pathway carbohydrate degradation; glycolysis; D-glyceraldehyde 3-phosphate from glycerone phosphate: step 1/1. Its function is as follows. Involved in the gluconeogenesis. Catalyzes stereospecifically the conversion of dihydroxyacetone phosphate (DHAP) to D-glyceraldehyde-3-phosphate (G3P). The polypeptide is Triosephosphate isomerase (Buchnera aphidicola subsp. Cinara cedri (strain Cc)).